Consider the following 135-residue polypeptide: Thyrostimulin beta-5 subunit (135 aa).

Positions 1–19 are cleaved as a signal peptide; sequence MVMPLVLSLALTPPPLCHA. 5 disulfide bridges follow: Cys-30-Cys-87, Cys-54-Cys-102, Cys-63-Cys-118, Cys-67-Cys-120, and Cys-123-Cys-130.

Belongs to the glycoprotein hormones subunit beta family. In terms of assembly, heterodimer with GPHA2; non-covalently-linked. Expressed by the venom duct.

The protein resides in the secreted. The polypeptide is Thyrostimulin beta-5 subunit (Conus victoriae (Queen Victoria cone)).